Consider the following 341-residue polypeptide: Methionine import ATP-binding protein MetN 2 (341 aa).

The region spanning 2–241 is the ABC transporter domain; the sequence is IKLNQIVKRY…PQHEVTKRFV (240 aa). 38-45 contacts ATP; the sequence is GFSGAGKS.

The protein belongs to the ABC transporter superfamily. Methionine importer (TC 3.A.1.24) family. In terms of assembly, the complex is composed of two ATP-binding proteins (MetN), two transmembrane proteins (MetI) and a solute-binding protein (MetQ).

The protein localises to the cell membrane. It carries out the reaction L-methionine(out) + ATP + H2O = L-methionine(in) + ADP + phosphate + H(+). It catalyses the reaction D-methionine(out) + ATP + H2O = D-methionine(in) + ADP + phosphate + H(+). Functionally, part of the ABC transporter complex MetNIQ involved in methionine import. Responsible for energy coupling to the transport system. The chain is Methionine import ATP-binding protein MetN 2 from Staphylococcus epidermidis (strain ATCC 35984 / DSM 28319 / BCRC 17069 / CCUG 31568 / BM 3577 / RP62A).